Here is a 283-residue protein sequence, read N- to C-terminus: Formamidopyrimidine-DNA glycosylase (283 aa).

Pro2 acts as the Schiff-base intermediate with DNA in catalysis. Glu3 acts as the Proton donor in catalysis. Lys60 functions as the Proton donor; for beta-elimination activity in the catalytic mechanism. DNA is bound by residues His95, Arg114, and Arg159. The FPG-type zinc-finger motif lies at 244 to 278 (WVYGRHNQPCRVCGTPIERIKLGGRSSHFCPQCQP). Arg268 acts as the Proton donor; for delta-elimination activity in catalysis.

The protein belongs to the FPG family. In terms of assembly, monomer. Zn(2+) is required as a cofactor.

It carries out the reaction Hydrolysis of DNA containing ring-opened 7-methylguanine residues, releasing 2,6-diamino-4-hydroxy-5-(N-methyl)formamidopyrimidine.. The catalysed reaction is 2'-deoxyribonucleotide-(2'-deoxyribose 5'-phosphate)-2'-deoxyribonucleotide-DNA = a 3'-end 2'-deoxyribonucleotide-(2,3-dehydro-2,3-deoxyribose 5'-phosphate)-DNA + a 5'-end 5'-phospho-2'-deoxyribonucleoside-DNA + H(+). Its function is as follows. Involved in base excision repair of DNA damaged by oxidation or by mutagenic agents. Acts as a DNA glycosylase that recognizes and removes damaged bases. Has a preference for oxidized purines, such as 7,8-dihydro-8-oxoguanine (8-oxoG). Has AP (apurinic/apyrimidinic) lyase activity and introduces nicks in the DNA strand. Cleaves the DNA backbone by beta-delta elimination to generate a single-strand break at the site of the removed base with both 3'- and 5'-phosphates. This is Formamidopyrimidine-DNA glycosylase from Crocosphaera subtropica (strain ATCC 51142 / BH68) (Cyanothece sp. (strain ATCC 51142)).